The chain runs to 221 residues: Translation initiation factor 6 (221 aa).

The protein belongs to the eIF-6 family.

In terms of biological role, binds to the 50S ribosomal subunit and prevents its association with the 30S ribosomal subunit to form the 70S initiation complex. This chain is Translation initiation factor 6, found in Halorubrum lacusprofundi (strain ATCC 49239 / DSM 5036 / JCM 8891 / ACAM 34).